The chain runs to 324 residues: tRNA U34 carboxymethyltransferase (324 aa).

Residues Lys91, Trp105, Lys110, Gly130, 152–154 (DPS), 181–182 (IE), Met196, Tyr200, and Arg315 each bind carboxy-S-adenosyl-L-methionine.

Belongs to the class I-like SAM-binding methyltransferase superfamily. CmoB family. Homotetramer.

The enzyme catalyses carboxy-S-adenosyl-L-methionine + 5-hydroxyuridine(34) in tRNA = 5-carboxymethoxyuridine(34) in tRNA + S-adenosyl-L-homocysteine + H(+). Catalyzes carboxymethyl transfer from carboxy-S-adenosyl-L-methionine (Cx-SAM) to 5-hydroxyuridine (ho5U) to form 5-carboxymethoxyuridine (cmo5U) at position 34 in tRNAs. This chain is tRNA U34 carboxymethyltransferase, found in Aliivibrio fischeri (strain ATCC 700601 / ES114) (Vibrio fischeri).